A 482-amino-acid chain; its full sequence is Probable glycine dehydrogenase (decarboxylating) subunit 2 (482 aa).

Lys-267 is subject to N6-(pyridoxal phosphate)lysine.

Belongs to the GcvP family. C-terminal subunit subfamily. As to quaternary structure, the glycine cleavage system is composed of four proteins: P, T, L and H. In this organism, the P 'protein' is a heterodimer of two subunits. Requires pyridoxal 5'-phosphate as cofactor.

It catalyses the reaction N(6)-[(R)-lipoyl]-L-lysyl-[glycine-cleavage complex H protein] + glycine + H(+) = N(6)-[(R)-S(8)-aminomethyldihydrolipoyl]-L-lysyl-[glycine-cleavage complex H protein] + CO2. Functionally, the glycine cleavage system catalyzes the degradation of glycine. The P protein binds the alpha-amino group of glycine through its pyridoxal phosphate cofactor; CO(2) is released and the remaining methylamine moiety is then transferred to the lipoamide cofactor of the H protein. This chain is Probable glycine dehydrogenase (decarboxylating) subunit 2, found in Aquifex aeolicus (strain VF5).